A 1176-amino-acid chain; its full sequence is Surface-layer 125 kDa protein (1176 aa).

Residues 1-30 (MAKQNKGRKFFAASATAALVASAIVPVASA) form the signal peptide. SLH domains lie at 31–88 (AQLN…LEAE), 89–152 (GDVN…DLSE), and 153–216 (FADA…PKVD).

It is found in the secreted. It localises to the cell wall. Its subcellular location is the S-layer. In terms of biological role, the S-layer is a paracrystalline mono-layered assembly of proteins which coat the surface of bacteria. The polypeptide is Surface-layer 125 kDa protein (Lysinibacillus sphaericus (Bacillus sphaericus)).